The primary structure comprises 236 residues: 2-C-methyl-D-erythritol 4-phosphate cytidylyltransferase (236 aa).

This sequence belongs to the IspD/TarI cytidylyltransferase family. IspD subfamily. As to quaternary structure, homodimer.

The catalysed reaction is 2-C-methyl-D-erythritol 4-phosphate + CTP + H(+) = 4-CDP-2-C-methyl-D-erythritol + diphosphate. It functions in the pathway isoprenoid biosynthesis; isopentenyl diphosphate biosynthesis via DXP pathway; isopentenyl diphosphate from 1-deoxy-D-xylulose 5-phosphate: step 2/6. Its function is as follows. Catalyzes the formation of 4-diphosphocytidyl-2-C-methyl-D-erythritol from CTP and 2-C-methyl-D-erythritol 4-phosphate (MEP). This Shigella flexneri serotype 5b (strain 8401) protein is 2-C-methyl-D-erythritol 4-phosphate cytidylyltransferase.